Here is a 605-residue protein sequence, read N- to C-terminus: Formin-binding protein 1-like (605 aa).

An F-BAR domain is found at 1 to 263 (MSWGTELWDQ…AAKSVDERRD (263 aa)). The stretch at 66–258 (FTSCIAFFNI…EGMILAAKSV (193 aa)) forms a coiled coil. Residues 245–535 (SKCLEGMILA…EFDDEFEDDD (291 aa)) form an interaction with CDC42 region. Ser-295 bears the Phosphoserine mark. A disordered region spans residues 325–345 (FGKKPKPQSPPLTPTSLFTSS). Positions 392-484 (LEDFSHLPPE…VEGKTGVRGD (93 aa)) form a coiled coil. In terms of domain architecture, REM-1 spans 397-474 (HLPPEQRRKK…IHKNEAWLSE (78 aa)). Positions 480–490 (GVRGDRRHSSD) are enriched in basic and acidic residues. Positions 480 to 539 (GVRGDRRHSSDINHLVTQGRESPEGSYTDDANQEVRGPPQQHGHHSEFDDEFEDDDPLPA) are disordered. 3 positions are modified to phosphoserine: Ser-488, Ser-501, and Ser-505. The tract at residues 522–605 (GHHSEFDDEF…VTLEKNSKGS (84 aa)) is interaction with DNM1. The span at 527-536 (FDDEFEDDDP) shows a compositional bias: acidic residues. An SH3 domain is found at 538–599 (PAIGHCKAIY…PTTYIDVTLE (62 aa)). Residues 541-597 (GHCKAIYPFDGHNEGTLAMKEGEVLYIIEEDKGDGWTRARRQNGEEGYVPTTYIDVT) are interaction with DNM2 and WASL. The tract at residues 541 to 605 (GHCKAIYPFD…VTLEKNSKGS (65 aa)) is interaction with DAAM1, DIAPH1 and DIAPH2.

Belongs to the FNBP1 family. As to quaternary structure, homodimerizes, the dimers can polymerize end-to-end to form filamentous structures. Interacts with GTP-bound CDC42. Interacts with DAAM1, DIAPH1, DIAPH2, DNM1, DNM2 and WASL/N-WASP. Interacts with ATG3. Interacts (via SH3 domain) with ABI1, WASF2, CDC42 and WIPF1. In terms of tissue distribution, isoform 1 is expressed in brain. Isoform 2 is expressed in brain, kidney and lung. Within the brain expression is seen in cortical neurons, hippocampal pyramidal neurons, hypothalamus and piriform cortex.

The protein resides in the cytoplasm. It localises to the cytoskeleton. Its subcellular location is the cell cortex. The protein localises to the cytoplasmic vesicle. It is found in the cell membrane. In terms of biological role, required to coordinate membrane tubulation with reorganization of the actin cytoskeleton during endocytosis. May bind to lipids such as phosphatidylinositol 4,5-bisphosphate and phosphatidylserine and promote membrane invagination and the formation of tubules. Also promotes CDC42-induced actin polymerization by activating the WASL-WASPIP complex, the predominant form of WASL/N-WASP in cells. Actin polymerization may promote the fission of membrane tubules to form endocytic vesicles. Essential for autophagy of intracellular bacterial pathogens. May negatively regulate neurite extension and axon branching in developing neurons. This chain is Formin-binding protein 1-like (Fnbp1l), found in Rattus norvegicus (Rat).